A 166-amino-acid polypeptide reads, in one-letter code: MVVAVYPGTFDPLTRGHEDLVRRASSIFDTLVVGVADSRAKKPFFSLEERLKIANEVLGHYPNVKVMGFTGLLKDFVRANDARVIVRGLRAVSDFEYEFQMAGMNRYLLPDVETMFMTPSDQYQFISGTIVREIAQLGGDVSKFVFPSVEKWLTEKVAAMAQGPSA.

Threonine 9 is a substrate binding site. ATP is bound by residues 9 to 10 and histidine 17; that span reads TF. Residues lysine 41, leucine 73, and arginine 87 each coordinate substrate. ATP contacts are provided by residues 88-90, glutamate 98, and 123-129; these read GLR and YQFISGT.

This sequence belongs to the bacterial CoaD family. Homohexamer. The cofactor is Mg(2+).

It localises to the cytoplasm. The enzyme catalyses (R)-4'-phosphopantetheine + ATP + H(+) = 3'-dephospho-CoA + diphosphate. It participates in cofactor biosynthesis; coenzyme A biosynthesis; CoA from (R)-pantothenate: step 4/5. Its function is as follows. Reversibly transfers an adenylyl group from ATP to 4'-phosphopantetheine, yielding dephospho-CoA (dPCoA) and pyrophosphate. The polypeptide is Phosphopantetheine adenylyltransferase (Burkholderia mallei (strain NCTC 10229)).